The sequence spans 339 residues: Leucine-rich repeat-containing protein 59 (339 aa).

Residues 1–282 are Cytoplasmic-facing; sequence MARGGGKSGS…KHSWSRSVLR (282 aa). LRR repeat units follow at residues 10–31, 40–61, 63–84, and 86–107; these read SLKD…SEVP, KATV…FCSL, HLVK…FGRL, and SLQH…FAQL. A coiled-coil region spans residues 181 to 254; it reads MKVIQSEQDR…EMEKKTKKET (74 aa). A disordered region spans residues 186–275; the sequence is SEQDRERQRK…PPQPARHKHS (90 aa). The segment covering 187–256 has biased composition (basic and acidic residues); that stretch reads EQDRERQRKL…EKKTKKETVQ (70 aa). The chain crosses the membrane as a helical span at residues 283-300; sequence ALLLVLLCILCTLAVCKL. Residues 301 to 339 lie on the Lumenal side of the membrane; sequence TELQHQPLCVSVNTLYEDVVAAVQNHKTLQNMLQQNSQQ.

As to quaternary structure, interacts with SGO1.

It is found in the microsome membrane. The protein localises to the endoplasmic reticulum membrane. Its subcellular location is the nucleus envelope. Functionally, required for nuclear import of FGF1. The sequence is that of Leucine-rich repeat-containing protein 59 (LRRC59) from Gallus gallus (Chicken).